The following is a 156-amino-acid chain: Small ribosomal subunit protein uS7 (156 aa).

The protein belongs to the universal ribosomal protein uS7 family. As to quaternary structure, part of the 30S ribosomal subunit. Contacts proteins S9 and S11.

One of the primary rRNA binding proteins, it binds directly to 16S rRNA where it nucleates assembly of the head domain of the 30S subunit. Is located at the subunit interface close to the decoding center, probably blocks exit of the E-site tRNA. The chain is Small ribosomal subunit protein uS7 from Dictyoglomus thermophilum (strain ATCC 35947 / DSM 3960 / H-6-12).